The chain runs to 289 residues: ATP synthase gamma chain (289 aa).

It belongs to the ATPase gamma chain family. F-type ATPases have 2 components, CF(1) - the catalytic core - and CF(0) - the membrane proton channel. CF(1) has five subunits: alpha(3), beta(3), gamma(1), delta(1), epsilon(1). CF(0) has three main subunits: a, b and c.

The protein resides in the cell inner membrane. Functionally, produces ATP from ADP in the presence of a proton gradient across the membrane. The gamma chain is believed to be important in regulating ATPase activity and the flow of protons through the CF(0) complex. The chain is ATP synthase gamma chain from Anaeromyxobacter dehalogenans (strain 2CP-C).